The following is a 102-amino-acid chain: UPF0235 protein msl4154 (102 aa).

The protein belongs to the UPF0235 family.

The protein is UPF0235 protein msl4154 of Mesorhizobium japonicum (strain LMG 29417 / CECT 9101 / MAFF 303099) (Mesorhizobium loti (strain MAFF 303099)).